A 121-amino-acid chain; its full sequence is Large ribosomal subunit protein uL14c (121 aa).

Component of the chloroplast large ribosomal subunit (LSU). Mature 70S chloroplast ribosomes of higher plants consist of a small (30S) and a large (50S) subunit. The 30S small subunit contains 1 molecule of ribosomal RNA (16S rRNA) and 24 different proteins. The 50S large subunit contains 3 rRNA molecules (23S, 5S and 4.5S rRNA) and 33 different proteins.

It is found in the plastid. Its subcellular location is the chloroplast. Its function is as follows. Component of the chloroplast ribosome (chloro-ribosome), a dedicated translation machinery responsible for the synthesis of chloroplast genome-encoded proteins, including proteins of the transcription and translation machinery and components of the photosynthetic apparatus. This is Large ribosomal subunit protein uL14c from Spinacia oleracea (Spinach).